The following is a 429-amino-acid chain: Zinc finger protein 275 (429 aa).

Positions 31–95 (VSDPSPNTDP…DGKRGSPQNL (65 aa)) are disordered. A compositionally biased stretch (polar residues) spans 34 to 51 (PSPNTDPAKYSESTSATR). Serine 76 is subject to Phosphoserine. Over residues 79–89 (FRQHGDSDGKR) the composition is skewed to basic and acidic residues. 2 consecutive C2H2-type zinc fingers follow at residues 101 to 123 (FACK…QRVH) and 129 to 151 (WECG…RKSH). Residues 149 to 176 (KSHVAAEPQPGPSRALENAAEKREQMER) are disordered. A compositionally biased stretch (basic and acidic residues) spans 167–176 (AAEKREQMER). 9 C2H2-type zinc fingers span residues 181–203 (FECE…LRVH), 209–231 (FDCE…QKLH), 237–259 (FACK…QRMH), 265–287 (FDCD…QRIH), 293–315 (YGCP…RRIH), 321–343 (YACG…ARIH), 349–371 (YACG…RRIH), 377–399 (YECD…RRIH), and 405–427 (CECS…QPTH).

It belongs to the krueppel C2H2-type zinc-finger protein family.

The protein localises to the nucleus. Functionally, may be involved in transcriptional regulation. The sequence is that of Zinc finger protein 275 (ZNF275) from Homo sapiens (Human).